Reading from the N-terminus, the 181-residue chain is Early upstream open reading frame (181 aa).

It belongs to the EUO family.

This is Early upstream open reading frame from Chlamydia caviae (strain ATCC VR-813 / DSM 19441 / 03DC25 / GPIC) (Chlamydophila caviae).